The following is a 131-amino-acid chain: Small ribosomal subunit protein uS9 (131 aa).

This sequence belongs to the universal ribosomal protein uS9 family.

This Actinobacillus pleuropneumoniae serotype 5b (strain L20) protein is Small ribosomal subunit protein uS9.